The sequence spans 190 residues: Cell division protein SepF (190 aa).

Belongs to the SepF family. Homodimer. Interacts with FtsZ.

The protein resides in the cytoplasm. Functionally, cell division protein that is part of the divisome complex and is recruited early to the Z-ring. Probably stimulates Z-ring formation, perhaps through the cross-linking of FtsZ protofilaments. Its function overlaps with FtsA. The polypeptide is Cell division protein SepF (Synechococcus sp. (strain WH7803)).